Here is a 149-residue protein sequence, read N- to C-terminus: Alpha-crystallin A chain (149 aa).

In terms of domain architecture, sHSP spans 41-149; sequence LFRSVLESGI…DASHGERPIP (109 aa). His89, Glu91, His96, and His143 together coordinate Zn(2+).

The protein belongs to the small heat shock protein (HSP20) family. Heteropolymer composed of three CRYAA and one CRYAB subunits. Inter-subunit bridging via zinc ions enhances stability, which is crucial as there is no protein turn over in the lens. Can also form homodimers and homotetramers (dimers of dimers) which serve as the building blocks of homooligomers. Within homooligomers, the zinc-binding motif is created from residues of 3 different molecules. His-89 and Glu-91 from one molecule are ligands of the zinc ion, and His-96 and His-143 residues from additional molecules complete the site with tetrahedral coordination geometry. Part of a complex required for lens intermediate filament formation composed of BFSP1, BFSP2 and CRYAA.

It is found in the cytoplasm. Its subcellular location is the nucleus. Functionally, contributes to the transparency and refractive index of the lens. May act as a chaperone, preventing aggregation of various proteins under a wide range of stress conditions. In Columba livia (Rock dove), this protein is Alpha-crystallin A chain (CRYAA).